We begin with the raw amino-acid sequence, 625 residues long: Autophagy-related protein 13b (625 aa).

Composition is skewed to low complexity over residues 322–332 (PSVSCSPSPTR) and 455–477 (PSGV…SSRS). Disordered stretches follow at residues 322-388 (PSVS…AVPR), 452-527 (FRRP…YPKK), and 544-564 (PPLR…NNNK). Positions 498–518 (ITDRNSRPGSFDHRGDIHEPF) are enriched in basic and acidic residues.

It belongs to the ATG13 family. Plant subfamily.

It localises to the cytoplasmic vesicle. The protein resides in the autophagosome. Involved in autophagy in a nutritional condition dependent manner. The ATG1-ATG13 protein kinase complex regulates downstream events required for autophagosome enclosure and/or vacuolar delivery. Becomes a target of autophagy under nutrient starvation. Connects autophagy to plant nutritional status. In Arabidopsis thaliana (Mouse-ear cress), this protein is Autophagy-related protein 13b.